The chain runs to 133 residues: Holo-[acyl-carrier-protein] synthase (133 aa).

Residues D8 and E56 each contribute to the Mg(2+) site.

The protein belongs to the P-Pant transferase superfamily. AcpS family. Requires Mg(2+) as cofactor.

It is found in the cytoplasm. It catalyses the reaction apo-[ACP] + CoA = holo-[ACP] + adenosine 3',5'-bisphosphate + H(+). In terms of biological role, transfers the 4'-phosphopantetheine moiety from coenzyme A to a Ser of acyl-carrier-protein. The protein is Holo-[acyl-carrier-protein] synthase of Clostridium perfringens (strain 13 / Type A).